The following is a 491-amino-acid chain: Ligand-gated ion channel 50 (491 aa).

An N-terminal signal peptide occupies residues 1-19 (MRFLLVLQLVFFYFSAATT). Residues N55 and N101 are each glycosylated (N-linked (GlcNAc...) asparagine). C157 and C171 form a disulfide bridge. Transmembrane regions (helical) follow at residues 241 to 261 (LFQS…GFFF), 265 to 287 (SVSA…FGNV), and 302 to 322 (VWMI…AIVC). N-linked (GlcNAc...) asparagine glycosylation occurs at N418. A helical membrane pass occupies residues 465–485 (MIMFPLSFLIFNVVYWSIYFM).

This sequence belongs to the ligand-gated ion channel (TC 1.A.9) family.

The protein localises to the postsynaptic cell membrane. Its subcellular location is the cell membrane. The polypeptide is Ligand-gated ion channel 50 (lgc-50) (Caenorhabditis elegans).